The primary structure comprises 342 residues: Succinylglutamate desuccinylase (342 aa).

Positions 62, 65, and 158 each coordinate Zn(2+). Residue glutamate 222 is part of the active site.

Belongs to the AspA/AstE family. Succinylglutamate desuccinylase subfamily. It depends on Zn(2+) as a cofactor.

The enzyme catalyses N-succinyl-L-glutamate + H2O = L-glutamate + succinate. It functions in the pathway amino-acid degradation; L-arginine degradation via AST pathway; L-glutamate and succinate from L-arginine: step 5/5. Its function is as follows. Transforms N(2)-succinylglutamate into succinate and glutamate. The protein is Succinylglutamate desuccinylase of Shewanella frigidimarina (strain NCIMB 400).